The following is an 885-amino-acid chain: Leucine--tRNA ligase (885 aa).

A 'HIGH' region motif is present at residues 46-56 (PYPSGALHMGH). Positions 638-642 (KMSKS) match the 'KMSKS' region motif. Lys-641 lines the ATP pocket.

This sequence belongs to the class-I aminoacyl-tRNA synthetase family.

It localises to the cytoplasm. It carries out the reaction tRNA(Leu) + L-leucine + ATP = L-leucyl-tRNA(Leu) + AMP + diphosphate. In Xanthomonas campestris pv. campestris (strain B100), this protein is Leucine--tRNA ligase.